The sequence spans 395 residues: Tryptophan--tRNA ligase (395 aa).

ATP is bound by residues 8–10 and 16–17; these read RPT and GH. Residues 9 to 17 carry the 'HIGH' region motif; the sequence is PTGKLHLGH. Residues 117-179 are insert; that stretch reads RLTDLEKEFK…EIEPEILKRL (63 aa). Residue Asp-204 coordinates L-tryptophan. Residues 216-218, Ile-254, and 261-265 each bind ATP; these read GED and KMSKS. The 'KMSKS' region motif lies at 261–265; it reads KMSKS.

Belongs to the class-I aminoacyl-tRNA synthetase family. As to quaternary structure, homodimer.

The protein resides in the cytoplasm. It carries out the reaction tRNA(Trp) + L-tryptophan + ATP = L-tryptophyl-tRNA(Trp) + AMP + diphosphate + H(+). Functionally, catalyzes the attachment of tryptophan to tRNA(Trp). In Aquifex aeolicus (strain VF5), this protein is Tryptophan--tRNA ligase.